The sequence spans 714 residues: Calpain-1 catalytic subunit (714 aa).

An N-acetylserine modification is found at S2. Residues 55-354 (LFRDEAFPPV…FTRLEICNLT (300 aa)) form the Calpain catalytic domain. Ca(2+)-binding residues include Q109 and D114. Active-site residues include C115, H272, and N296. Ca(2+) is bound by residues N316, D318, and D323. Residue T354 is modified to Phosphothreonine. The interval 355-526 (PDALKSRTIR…KSAGTVELDD (172 aa)) is domain III. The segment at 527–542 (QIQANLPDEQVLSEEE) is linker. 4 consecutive EF-hand domains span residues 541 to 576 (EEIDENFKALFRQLAGEDMEISVKELRTILNRIISK), 585 to 618 (FSLESCRSMVNLMDRDGNGKLGLVEFNILWNRIR), 615 to 650 (NRIRNYLSIFRKFDLDKSGSMSAYEMRMAIESAGFK), and 680 to 714 (VRLETMFRFFKTLDTDLDGVVTFDLFKWLQLTMFA). Positions 543 to 713 (IDENFKALFR…LFKWLQLTMF (171 aa)) are domain IV. Residues D598, D600, N602, K604, E609, D628, D630, S632, S634, and E639 each coordinate Ca(2+).

It belongs to the peptidase C2 family. Forms a heterodimer with a small (regulatory) subunit CAPNS1. Requires Ca(2+) as cofactor. Post-translationally, undergoes calcium-induced successive autoproteolytic cleavages that generate a membrane-bound 78 kDa active form and an intracellular 75 kDa active form. Calpastatin reduces with high efficiency the transition from 78 kDa to 75 kDa calpain forms. Ubiquitous.

It localises to the cytoplasm. The protein localises to the cell membrane. It catalyses the reaction Broad endopeptidase specificity.. Activated by micromolar concentrations of calcium and inhibited by calpastatin. Calcium-regulated non-lysosomal thiol-protease which catalyzes limited proteolysis of substrates involved in cytoskeletal remodeling and signal transduction. Proteolytically cleaves CTBP1 at 'Asn-375', 'Gly-387' and 'His-409'. Cleaves and activates caspase-7 (CASP7). This chain is Calpain-1 catalytic subunit, found in Homo sapiens (Human).